The chain runs to 149 residues: Endoribonuclease YbeY (149 aa).

Residues histidine 113, histidine 117, and histidine 123 each contribute to the Zn(2+) site.

The protein belongs to the endoribonuclease YbeY family. It depends on Zn(2+) as a cofactor.

It is found in the cytoplasm. In terms of biological role, single strand-specific metallo-endoribonuclease involved in late-stage 70S ribosome quality control and in maturation of the 3' terminus of the 16S rRNA. This is Endoribonuclease YbeY from Saccharophagus degradans (strain 2-40 / ATCC 43961 / DSM 17024).